A 704-amino-acid chain; its full sequence is UvrABC system protein C (704 aa).

The interval 1–77 (MIHDPAEPPA…PAQAGAGPMA (77 aa)) is disordered. The segment covering 49–66 (VEEDDEARLPEVEDEPEA) has biased composition (acidic residues). Residues 67–77 (EPAQAGAGPMA) show a composition bias toward low complexity. A GIY-YIG domain is found at 92 to 170 (TSPGVYRMLN…IKQLRPRFNV (79 aa)). Positions 280–315 (RAVKELLAAEMEKASGELEFETAALYRDRLAALSAI) constitute a UVR domain.

The protein belongs to the UvrC family. As to quaternary structure, interacts with UvrB in an incision complex.

The protein localises to the cytoplasm. In terms of biological role, the UvrABC repair system catalyzes the recognition and processing of DNA lesions. UvrC both incises the 5' and 3' sides of the lesion. The N-terminal half is responsible for the 3' incision and the C-terminal half is responsible for the 5' incision. This chain is UvrABC system protein C, found in Rhodopseudomonas palustris (strain ATCC BAA-98 / CGA009).